A 258-amino-acid polypeptide reads, in one-letter code: MQKIFRPFQLTRGFTSSVKNFRQWRLIETRKIAKQPNYQVGDAKPLHMPKERKKFPDYKYGESNIFKQSNKGLYGGSFVQFGNNISESKAKTRKKWLPNVVKKGLWSETLNRKISIKMTAKVLKTISKEGGIDNYLTKEKSARIKELGPTGWKLRYRVLKRKDEIENPPHKDAPIIEMAGGKKAKIYYDEIVNGSPRKISVGRRRLMSFLYPLEKLEYRSVGKDLNYKKFVELFADVPVKDILARLEDHKFDLSTITV.

A mitochondrion-targeting transit peptide spans 1–21; sequence MQKIFRPFQLTRGFTSSVKNF.

The protein belongs to the bacterial ribosomal protein bL28 family. Component of the mitochondrial large ribosomal subunit (mt-LSU). Mature yeast 74S mitochondrial ribosomes consist of a small (37S) and a large (54S) subunit. The 37S small subunit contains a 15S ribosomal RNA (15S mt-rRNA) and 34 different proteins. The 54S large subunit contains a 21S rRNA (21S mt-rRNA) and 46 different proteins.

It localises to the mitochondrion. Its function is as follows. Component of the mitochondrial ribosome (mitoribosome), a dedicated translation machinery responsible for the synthesis of mitochondrial genome-encoded proteins, including at least some of the essential transmembrane subunits of the mitochondrial respiratory chain. The mitoribosomes are attached to the mitochondrial inner membrane and translation products are cotranslationally integrated into the membrane. This Saccharomyces cerevisiae (strain ATCC 204508 / S288c) (Baker's yeast) protein is Large ribosomal subunit protein bL28m (MRPL24).